Reading from the N-terminus, the 339-residue chain is GTPase Obg (339 aa).

The 159-residue stretch at 1–159 (MKFVDEAFVR…RELKLELKLL (159 aa)) folds into the Obg domain. A disordered region spans residues 127–147 (NTHFKSSTNRAPRRTTSGEEG). One can recognise an OBG-type G domain in the interval 160–333 (ADVGLLGLPN…LCYDLMSFLE (174 aa)). Residues 166 to 173 (GLPNAGKS), 191 to 195 (FTTLY), 213 to 216 (DIPG), 283 to 286 (NKID), and 314 to 316 (SAI) contribute to the GTP site. Mg(2+)-binding residues include S173 and T193.

Belongs to the TRAFAC class OBG-HflX-like GTPase superfamily. OBG GTPase family. Monomer. The cofactor is Mg(2+).

The protein localises to the cytoplasm. Its function is as follows. An essential GTPase which binds GTP, GDP and possibly (p)ppGpp with moderate affinity, with high nucleotide exchange rates and a fairly low GTP hydrolysis rate. Plays a role in control of the cell cycle, stress response, ribosome biogenesis and in those bacteria that undergo differentiation, in morphogenesis control. The sequence is that of GTPase Obg from Coxiella burnetii (strain CbuK_Q154) (Coxiella burnetii (strain Q154)).